The following is a 188-amino-acid chain: Shikimate kinase (188 aa).

21–26 is a binding site for ATP; the sequence is GAGKTT. Mg(2+) is bound at residue Thr25. Residues Asp43, Arg67, and Gly90 each contribute to the substrate site. Arg130 contributes to the ATP binding site. Arg148 contacts substrate.

Belongs to the shikimate kinase family. As to quaternary structure, monomer. Mg(2+) is required as a cofactor.

Its subcellular location is the cytoplasm. It catalyses the reaction shikimate + ATP = 3-phosphoshikimate + ADP + H(+). The protein operates within metabolic intermediate biosynthesis; chorismate biosynthesis; chorismate from D-erythrose 4-phosphate and phosphoenolpyruvate: step 5/7. Catalyzes the specific phosphorylation of the 3-hydroxyl group of shikimic acid using ATP as a cosubstrate. This is Shikimate kinase from Geobacillus thermodenitrificans (strain NG80-2).